A 366-amino-acid chain; its full sequence is Chorismate synthase (366 aa).

An NADP(+)-binding site is contributed by arginine 48. Residues 125-127, 241-242, glycine 285, 300-304, and arginine 326 each bind FMN; these read RSS, NA, and KPTSS.

Belongs to the chorismate synthase family. In terms of assembly, homotetramer. The cofactor is FMNH2.

It carries out the reaction 5-O-(1-carboxyvinyl)-3-phosphoshikimate = chorismate + phosphate. It participates in metabolic intermediate biosynthesis; chorismate biosynthesis; chorismate from D-erythrose 4-phosphate and phosphoenolpyruvate: step 7/7. Its function is as follows. Catalyzes the anti-1,4-elimination of the C-3 phosphate and the C-6 proR hydrogen from 5-enolpyruvylshikimate-3-phosphate (EPSP) to yield chorismate, which is the branch point compound that serves as the starting substrate for the three terminal pathways of aromatic amino acid biosynthesis. This reaction introduces a second double bond into the aromatic ring system. The sequence is that of Chorismate synthase from Paracoccus denitrificans (strain Pd 1222).